The sequence spans 388 residues: 3-oxo-tetronate kinase (388 aa).

Residues serine 258 and 360-363 (GGET) contribute to the ATP site.

The protein belongs to the four-carbon acid sugar kinase family.

It carries out the reaction 3-dehydro-L-erythronate + ATP = 3-dehydro-4-O-phospho-L-erythronate + ADP + H(+). It catalyses the reaction 3-dehydro-D-erythronate + ATP = 3-dehydro-4-O-phospho-D-erythronate + ADP + H(+). In terms of biological role, catalyzes the ATP-dependent phosphorylation of 3-oxo-tetronate to 3-oxo-tetronate 4-phosphate. The chain is 3-oxo-tetronate kinase from Escherichia coli (strain K12).